Here is a 566-residue protein sequence, read N- to C-terminus: Tetratricopeptide repeat protein 34 (566 aa).

The interval 1-29 (MLQRSPRAGPSRAQGRREAAETGGPTTQE) is disordered. 8 TPR repeats span residues 50–83 (EASR…RPQA), 178–211 (SESL…EPGN), 212–245 (VQAL…GPGT), 306–339 (PHWH…APTS), 341–373 (AARA…DAPD), 424–457 (ACHL…ALGD), 464–497 (AEDF…APSL), and 512–545 (ARMF…DPDH).

The polypeptide is Tetratricopeptide repeat protein 34 (TTC34) (Homo sapiens (Human)).